Reading from the N-terminus, the 397-residue chain is CCA-adding enzyme (397 aa).

Residues Gly26 and Arg29 each coordinate ATP. Gly26 and Arg29 together coordinate CTP. Residues Asp39 and Asp41 each contribute to the Mg(2+) site. The ATP site is built by Arg110, Asp153, Arg156, Arg159, and Arg162. Arg110, Asp153, Arg156, Arg159, and Arg162 together coordinate CTP.

The protein belongs to the tRNA nucleotidyltransferase/poly(A) polymerase family. Bacterial CCA-adding enzyme type 3 subfamily. Homodimer. Mg(2+) serves as cofactor.

It carries out the reaction a tRNA precursor + 2 CTP + ATP = a tRNA with a 3' CCA end + 3 diphosphate. The catalysed reaction is a tRNA with a 3' CCA end + 2 CTP + ATP = a tRNA with a 3' CCACCA end + 3 diphosphate. In terms of biological role, catalyzes the addition and repair of the essential 3'-terminal CCA sequence in tRNAs without using a nucleic acid template. Adds these three nucleotides in the order of C, C, and A to the tRNA nucleotide-73, using CTP and ATP as substrates and producing inorganic pyrophosphate. tRNA 3'-terminal CCA addition is required both for tRNA processing and repair. Also involved in tRNA surveillance by mediating tandem CCA addition to generate a CCACCA at the 3' terminus of unstable tRNAs. While stable tRNAs receive only 3'-terminal CCA, unstable tRNAs are marked with CCACCA and rapidly degraded. The chain is CCA-adding enzyme from Bacillus cereus (strain ZK / E33L).